The sequence spans 88 residues: CRISPR-associated endoribonuclease Cas2 2 (88 aa).

Aspartate 8 contacts Mg(2+).

The protein belongs to the CRISPR-associated endoribonuclease Cas2 protein family. Homodimer, forms a heterotetramer with a Cas1 homodimer. Requires Mg(2+) as cofactor.

Its function is as follows. CRISPR (clustered regularly interspaced short palindromic repeat), is an adaptive immune system that provides protection against mobile genetic elements (viruses, transposable elements and conjugative plasmids). CRISPR clusters contain sequences complementary to antecedent mobile elements and target invading nucleic acids. CRISPR clusters are transcribed and processed into CRISPR RNA (crRNA). Functions as a ssRNA-specific endoribonuclease. Involved in the integration of spacer DNA into the CRISPR cassette. The polypeptide is CRISPR-associated endoribonuclease Cas2 2 (cas22) (Saccharolobus solfataricus (strain ATCC 35092 / DSM 1617 / JCM 11322 / P2) (Sulfolobus solfataricus)).